The sequence spans 237 residues: Uridylate kinase (237 aa).

Residue 10–13 (KLSG) participates in ATP binding. A UMP-binding site is contributed by Gly-51. ATP-binding residues include Gly-52 and Arg-56. UMP contacts are provided by residues Asp-71 and 132 to 139 (MGMPFFST). Positions 160, 166, and 169 each coordinate ATP.

This sequence belongs to the UMP kinase family. Homohexamer.

It is found in the cytoplasm. The catalysed reaction is UMP + ATP = UDP + ADP. It functions in the pathway pyrimidine metabolism; CTP biosynthesis via de novo pathway; UDP from UMP (UMPK route): step 1/1. With respect to regulation, inhibited by UTP. Functionally, catalyzes the reversible phosphorylation of UMP to UDP. The protein is Uridylate kinase of Nocardioides sp. (strain ATCC BAA-499 / JS614).